The following is a 351-amino-acid chain: Outer membrane porin protein 32 (351 aa).

An N-terminal signal peptide occupies residues 1 to 19 (MKKSLIALAVLAASGAAMA). Q20 is modified (pyrrolidone carboxylic acid).

The protein to bacterial outer membrane proteins and porins. Homotrimer.

The protein resides in the cell outer membrane. Forms anion selective channels. This chain is Outer membrane porin protein 32 (omp32), found in Delftia acidovorans (Pseudomonas acidovorans).